A 250-amino-acid polypeptide reads, in one-letter code: Probable transcriptional regulatory protein MAP_1030 (250 aa).

The protein belongs to the TACO1 family.

It localises to the cytoplasm. This is Probable transcriptional regulatory protein MAP_1030 from Mycolicibacterium paratuberculosis (strain ATCC BAA-968 / K-10) (Mycobacterium paratuberculosis).